An 884-amino-acid polypeptide reads, in one-letter code: Valine--tRNA ligase (884 aa).

Positions 46–56 (PNVTGKLHLGH) match the 'HIGH' region motif. Residues 520–524 (KMSKS) carry the 'KMSKS' region motif. Lysine 523 serves as a coordination point for ATP. Residues 809 to 844 (LADLLNVEEELARLEKELAKWQKELNMVGKKLSNER) adopt a coiled-coil conformation.

Belongs to the class-I aminoacyl-tRNA synthetase family. ValS type 1 subfamily. In terms of assembly, monomer.

The protein resides in the cytoplasm. It carries out the reaction tRNA(Val) + L-valine + ATP = L-valyl-tRNA(Val) + AMP + diphosphate. Its function is as follows. Catalyzes the attachment of valine to tRNA(Val). As ValRS can inadvertently accommodate and process structurally similar amino acids such as threonine, to avoid such errors, it has a 'posttransfer' editing activity that hydrolyzes mischarged Thr-tRNA(Val) in a tRNA-dependent manner. This is Valine--tRNA ligase from Streptococcus agalactiae serotype III (strain NEM316).